We begin with the raw amino-acid sequence, 257 residues long: Putative hydro-lyase BceJ2315_40370 (257 aa).

The protein belongs to the D-glutamate cyclase family.

The protein is Putative hydro-lyase BceJ2315_40370 of Burkholderia cenocepacia (strain ATCC BAA-245 / DSM 16553 / LMG 16656 / NCTC 13227 / J2315 / CF5610) (Burkholderia cepacia (strain J2315)).